The primary structure comprises 329 residues: Ornithine carbamoyltransferase (329 aa).

Carbamoyl phosphate contacts are provided by residues 51-54 (STRT), Q78, R102, and 129-132 (HPVQ). L-ornithine is bound by residues N174, D238, and 242–243 (SM). Carbamoyl phosphate contacts are provided by residues 278–279 (CL) and R306.

Belongs to the aspartate/ornithine carbamoyltransferase superfamily. OTCase family.

Its subcellular location is the cytoplasm. It catalyses the reaction carbamoyl phosphate + L-ornithine = L-citrulline + phosphate + H(+). It participates in amino-acid biosynthesis; L-arginine biosynthesis; L-arginine from L-ornithine and carbamoyl phosphate: step 1/3. In terms of biological role, reversibly catalyzes the transfer of the carbamoyl group from carbamoyl phosphate (CP) to the N(epsilon) atom of ornithine (ORN) to produce L-citrulline. The chain is Ornithine carbamoyltransferase from Helicobacter hepaticus (strain ATCC 51449 / 3B1).